A 143-amino-acid chain; its full sequence is Large ribosomal subunit protein uL11 (143 aa).

The protein belongs to the universal ribosomal protein uL11 family. As to quaternary structure, part of the ribosomal stalk of the 50S ribosomal subunit. Interacts with L10 and the large rRNA to form the base of the stalk. L10 forms an elongated spine to which L12 dimers bind in a sequential fashion forming a multimeric L10(L12)X complex. In terms of processing, one or more lysine residues are methylated.

In terms of biological role, forms part of the ribosomal stalk which helps the ribosome interact with GTP-bound translation factors. The polypeptide is Large ribosomal subunit protein uL11 (Chromohalobacter salexigens (strain ATCC BAA-138 / DSM 3043 / CIP 106854 / NCIMB 13768 / 1H11)).